The sequence spans 389 residues: Cellobiose 2-epimerase (389 aa).

This sequence belongs to the cellobiose 2-epimerase family.

Its subcellular location is the cytoplasm. The enzyme catalyses D-cellobiose = beta-D-glucosyl-(1-&gt;4)-D-mannopyranose. Its activity is regulated as follows. Enhanced by Mg(2+) and Ca(2+) ions, ethylenediaminetetraacetic acid, ethylene glycol tetraacetic acid and citrate. Inhibited by Al(3+), Fe(3+), Co(2+), Cu(2+), Zn(2+), Pb(2+) and Ag(+) ions, iodoacetate, 4-chloromercuribenzoate and N-bromosuccinimide. In terms of biological role, catalyzes the reversible epimerization of cellobiose to 4-O-beta-D-glucopyranosyl-D-mannose (Glc-Man). Can also epimerize cellotriose to Glc-Glc-Man, cellotetraose to Glc-Glc-Glc-Man, and lactose to epilactose. This is Cellobiose 2-epimerase (ce-ne1) from Ruminococcus albus.